We begin with the raw amino-acid sequence, 1308 residues long: Receptor tyrosine-protein kinase erbB-4 (1308 aa).

A signal peptide spans 1–25 (MKLATGLWVWGSLLMAAGTVQPSAS). The Extracellular segment spans residues 26–652 (QSVCAGTENK…TLPQHARTPL (627 aa)). Cysteine 29 and cysteine 56 are disulfide-bonded. Asparagine 138, asparagine 174, and asparagine 181 each carry an N-linked (GlcNAc...) asparagine glycan. 12 disulfide bridges follow: cysteine 156–cysteine 186, cysteine 189–cysteine 197, cysteine 193–cysteine 205, cysteine 213–cysteine 221, cysteine 217–cysteine 229, cysteine 230–cysteine 238, cysteine 234–cysteine 246, cysteine 249–cysteine 258, cysteine 262–cysteine 289, cysteine 293–cysteine 304, cysteine 308–cysteine 323, and cysteine 326–cysteine 330. A glycan (N-linked (GlcNAc...) asparagine) is linked at asparagine 253. N-linked (GlcNAc...) asparagine glycans are attached at residues asparagine 410, asparagine 473, and asparagine 495. Disulfide bonds link cysteine 503/cysteine 512, cysteine 507/cysteine 520, cysteine 523/cysteine 532, cysteine 536/cysteine 552, cysteine 555/cysteine 569, cysteine 559/cysteine 577, cysteine 580/cysteine 589, cysteine 593/cysteine 614, cysteine 617/cysteine 625, and cysteine 621/cysteine 633. N-linked (GlcNAc...) asparagine glycosylation occurs at asparagine 548. Asparagine 576 carries N-linked (GlcNAc...) asparagine glycosylation. Asparagine 620 carries N-linked (GlcNAc...) asparagine glycosylation. Residues 653–673 (IAAGVIGGLFILVIMALTFAV) are membrane-embedded. Topologically, residues 674–1308 (YVRRKSIKKK…PPYRHRNTVV (635 aa)) are cytoplasmic. The short motif at 676-684 (RRKSIKKKR) is the Nuclear localization signal element. The Protein kinase domain occupies 718–985 (LKRVKVLGSG…RMARDPQRYL (268 aa)). Residues 724-732 (LGSGAFGTV), lysine 751, 797-799 (QLM), and 843-848 (DLAARN) contribute to the ATP site. Aspartate 843 functions as the Proton acceptor in the catalytic mechanism. Tyrosine 875, tyrosine 1035, and tyrosine 1056 each carry phosphotyrosine; by autocatalysis. A PPxy motif 1 motif is present at residues 1032–1035 (PPIY). The segment at 1117-1149 (PHVQEDSSTQRYSADPTVFAPERNPRGELDEEG) is disordered. 7 positions are modified to phosphotyrosine; by autocatalysis: tyrosine 1150, tyrosine 1162, tyrosine 1188, tyrosine 1202, tyrosine 1242, tyrosine 1258, and tyrosine 1284. The PPxY motif 2 motif lies at 1282–1285 (PEYL). A PDZ-binding motif is present at residues 1290 to 1292 (LKP).

This sequence belongs to the protein kinase superfamily. Tyr protein kinase family. EGF receptor subfamily. Monomer in the absence of bound ligand. Homodimer or heterodimer with another ERBB family member upon ligand binding, thus forming heterotetramers. Interacts with EGFR and ERBB2. Interacts with DLG2 (via its PDZ domain), DLG3 (via its PDZ domain), DLG4 (via its PDZ domain) and SNTB2 (via its PDZ domain). Interacts with MUC1. Interacts (via its PPxy motifs) with WWOX. Interacts (via the PPxY motif 3 of isoform JM-A CYT-2) with YAP1 (via the WW domain 1 of isoform 1). Interacts (isoform JM-A CYT-1 and isoform JM-B CYT-1) with WWP1. Interacts (via its intracellular domain) with TRIM28. Interacts (via the intracellular domains of both CYT-1 and CYT-2 isoforms) with KAP1; the interaction does not phosphorylate KAP1 but represses ERBB4-mediated transcriptional activity. Interacts with PRPU, DDX23, MATR3, RBM15, ILF3, KAP1, U5S1, U2SURP, ITCH, HNRNPU, AP2A1, NULC, LEO1, WWP2, IGHG1, HXK1, GRB7 and SRRT. Interacts (phosphorylated isoform JM-A CYT-1 and isoform JM-B CYT-1) with PIK3R1. Interacts with SHC1. Interacts with GRB2. Interacts (soluble intracellular domain) with BCL2. Interacts (phosphorylated) with STAT1. Interacts with CBFA2T3. Interacts (soluble intracellular domain) with STAT5A. Post-translationally, isoform JM-A CYT-1 and isoform JM-A CYT-2 are processed by ADAM17. Proteolytic processing in response to ligand or 12-O-tetradecanoylphorbol-13-acetate stimulation results in the production of 120 kDa soluble receptor forms and intermediate membrane-anchored 80 kDa fragments (m80HER4), which are further processed by a presenilin-dependent gamma-secretase to release a cytoplasmic intracellular domain (E4ICD; E4ICD1/s80Cyt1 or E4ICD2/s80Cyt2, depending on the isoform). Membrane-anchored 80 kDa fragments of the processed isoform JM-A CYT-1 are more readily degraded by the proteasome than fragments of isoform JM-A CYT-2, suggesting a prevalence of E4ICD2 over E4ICD1. Isoform JM-B CYT-1 and isoform JM-B CYT-2 lack the ADAM17 cleavage site and are not processed by ADAM17, precluding further processing by gamma-secretase. Autophosphorylated on tyrosine residues in response to ligand binding. Autophosphorylation occurs in trans, i.e. one subunit of the dimeric receptor phosphorylates tyrosine residues on the other subunit. Ligands trigger phosphorylation at specific tyrosine residues, thereby creating binding sites for scaffold proteins and effectors. Constitutively phosphorylated at a basal level when overexpressed in heterologous systems; ligand binding leads to increased phosphorylation. Phosphorylation at Tyr-1035 is important for interaction with STAT1. Phosphorylation at Tyr-1056 is important for interaction with PIK3R1. Phosphorylation at Tyr-1242 is important for interaction with SHC1. Phosphorylation at Tyr-1188 may also contribute to the interaction with SHC1. Isoform JM-A CYT-2 is constitutively phosphorylated on tyrosine residues in a ligand-independent manner. E4ICD2 but not E4ICD1 is phosphorylated on tyrosine residues. In terms of processing, ubiquitinated. During mitosis, the ERBB4 intracellular domain is ubiquitinated by the APC/C complex and targeted to proteasomal degradation. Isoform JM-A CYT-1 and isoform JM-B CYT-1 are ubiquitinated by WWP1. The ERBB4 intracellular domain (E4ICD1) is ubiquitinated, and this involves NEDD4. Isoform JM-A CYT-2 and isoform JM-B CYT-2 are expressed in cerebellum, cerebral cortex, spinal cord, medulla oblongata and eye, but the kidney expresses solely isoform JM-A CYT-2 and the heart solely isoform JM-B CYT-2.

Its subcellular location is the cell membrane. The protein localises to the nucleus. It is found in the mitochondrion. The catalysed reaction is L-tyrosyl-[protein] + ATP = O-phospho-L-tyrosyl-[protein] + ADP + H(+). Binding of a cognate ligand leads to dimerization and activation by autophosphorylation on tyrosine residues. In vitro kinase activity is increased by Mg(2+). Its function is as follows. Tyrosine-protein kinase that plays an essential role as cell surface receptor for neuregulins and EGF family members and regulates development of the heart, the central nervous system and the mammary gland, gene transcription, cell proliferation, differentiation, migration and apoptosis. Required for normal cardiac muscle differentiation during embryonic development, and for postnatal cardiomyocyte proliferation. Required for normal development of the embryonic central nervous system, especially for normal neural crest cell migration and normal axon guidance. Required for mammary gland differentiation, induction of milk proteins and lactation. Acts as cell-surface receptor for the neuregulins NRG1, NRG2, NRG3 and NRG4 and the EGF family members BTC, EREG and HBEGF. Ligand binding triggers receptor dimerization and autophosphorylation at specific tyrosine residues that then serve as binding sites for scaffold proteins and effectors. Ligand specificity and signaling is modulated by alternative splicing, proteolytic processing, and by the formation of heterodimers with other ERBB family members, thereby creating multiple combinations of intracellular phosphotyrosines that trigger ligand- and context-specific cellular responses. Mediates phosphorylation of SHC1 and activation of the MAP kinases MAPK1/ERK2 and MAPK3/ERK1. Isoform JM-A CYT-1 and isoform JM-B CYT-1 phosphorylate PIK3R1, leading to the activation of phosphatidylinositol 3-kinase and AKT1 and protect cells against apoptosis. Isoform JM-A CYT-1 and isoform JM-B CYT-1 mediate reorganization of the actin cytoskeleton and promote cell migration in response to NRG1. Isoform JM-A CYT-2 and isoform JM-B CYT-2 lack the phosphotyrosine that mediates interaction with PIK3R1, and hence do not phosphorylate PIK3R1, do not protect cells against apoptosis, and do not promote reorganization of the actin cytoskeleton and cell migration. Proteolytic processing of isoform JM-A CYT-1 and isoform JM-A CYT-2 gives rise to the corresponding soluble intracellular domains (4ICD) that translocate to the nucleus, promote nuclear import of STAT5A, activation of STAT5A, mammary epithelium differentiation, cell proliferation and activation of gene expression. The ERBB4 soluble intracellular domains (4ICD) colocalize with STAT5A at the CSN2 promoter to regulate transcription of milk proteins during lactation. The ERBB4 soluble intracellular domains can also translocate to mitochondria and promote apoptosis. In Mus musculus (Mouse), this protein is Receptor tyrosine-protein kinase erbB-4 (Erbb4).